The sequence spans 469 residues: Cytosolic Fe-S cluster assembly factor NAR1 (469 aa).

[4Fe-4S] cluster is bound by residues C20, C56, C59, C62, C168, C215, C394, and C398.

Belongs to the NARF family.

In terms of biological role, component of the cytosolic Fe/S protein assembly machinery. Required for maturation of extramitochondrial Fe/S proteins. May play a role in the transfer of pre-assembled Fe/S clusters to target apoproteins. The chain is Cytosolic Fe-S cluster assembly factor NAR1 (NAR1) from Kluyveromyces lactis (strain ATCC 8585 / CBS 2359 / DSM 70799 / NBRC 1267 / NRRL Y-1140 / WM37) (Yeast).